Consider the following 265-residue polypeptide: Anaphase-promoting complex subunit 9 (265 aa).

The APC/C is composed of at least 13 subunits that stay tightly associated throughout the cell cycle: APC1, APC2, APC4, APC5, APC9, APC11, CDC16, CDC23, CDC26, CDC27, DOC1, MND2 and SWM1.

Its subcellular location is the cytoplasm. It localises to the nucleus. It participates in protein modification; protein ubiquitination. In terms of biological role, component of the anaphase promoting complex/cyclosome (APC/C), a cell cycle-regulated E3 ubiquitin-protein ligase complex that controls progression through mitosis and the G1 phase of the cell cycle. The APC/C is thought to confer substrate specificity and, in the presence of ubiquitin-conjugating E2 enzymes, it catalyzes the formation of protein-ubiquitin conjugates that are subsequently degraded by the 26S proteasome. In early mitosis, the APC/C is activated by CDC20 and targets securin PDS1, the B-type cyclin CLB5, and other anaphase inhibitory proteins for proteolysis, thereby triggering the separation of sister chromatids at the metaphase-to-anaphase transition. In late mitosis and in G1, degradation of CLB5 allows activation of the APC/C by CDH1, which is needed to destroy CDC20 and the B-type cyclin CLB2 to allow exit from mitosis and creating the low CDK state necessary for cytokinesis and for reforming prereplicative complexes in G1 prior to another round of replication. This chain is Anaphase-promoting complex subunit 9 (APC9), found in Saccharomyces cerevisiae (strain ATCC 204508 / S288c) (Baker's yeast).